Reading from the N-terminus, the 667-residue chain is Putative L-type lectin-domain containing receptor kinase I.4 (667 aa).

The signal sequence occupies residues 1-21; sequence MDCRLHLVLFFSCVCLICLSG. The Extracellular portion of the chain corresponds to 22–294; that stretch reads QQETGFVYNG…PREEKKKLHP (273 aa). The legume-lectin like stretch occupies residues 24–257; the sequence is ETGFVYNGFH…NQYILGWSFS (234 aa). N-linked (GlcNAc...) asparagine glycans are attached at residues N55, N110, N124, N128, N181, N204, and N225. A helical transmembrane segment spans residues 295–315; sequence LLIGLVILLVIPVLMVLGGVY. Over 316–667 the chain is Cytoplasmic; it reads WYRRKKYAEV…THSILEGYGR (352 aa). The 276-residue stretch at 350-625 folds into the Protein kinase domain; it reads FVKDALVGKG…QYLSQKQPLP (276 aa). Residues 356–364 and K378 each bind ATP; that span reads VGKGGFGKV. The active-site Proton acceptor is D474.

This sequence in the C-terminal section; belongs to the protein kinase superfamily. Ser/Thr protein kinase family. The protein in the N-terminal section; belongs to the leguminous lectin family.

The protein resides in the cell membrane. It catalyses the reaction L-seryl-[protein] + ATP = O-phospho-L-seryl-[protein] + ADP + H(+). It carries out the reaction L-threonyl-[protein] + ATP = O-phospho-L-threonyl-[protein] + ADP + H(+). This chain is Putative L-type lectin-domain containing receptor kinase I.4 (LECRK14), found in Arabidopsis thaliana (Mouse-ear cress).